Here is a 183-residue protein sequence, read N- to C-terminus: Ribonuclease M5 (183 aa).

Positions 6 to 90 (KEVIVVEGKD…AYISRVSGTK (85 aa)) constitute a Toprim domain. 3 residues coordinate Mg(2+): Glu-12, Asp-59, and Asp-61.

It belongs to the ribonuclease M5 family. Requires Mg(2+) as cofactor.

It is found in the cytoplasm. The catalysed reaction is Endonucleolytic cleavage of RNA, removing 21 and 42 nucleotides, respectively, from the 5'- and 3'-termini of a 5S-rRNA precursor.. Required for correct processing of both the 5' and 3' ends of 5S rRNA precursor. Cleaves both sides of a double-stranded region yielding mature 5S rRNA in one step. In Fusobacterium nucleatum subsp. nucleatum (strain ATCC 25586 / DSM 15643 / BCRC 10681 / CIP 101130 / JCM 8532 / KCTC 2640 / LMG 13131 / VPI 4355), this protein is Ribonuclease M5.